A 121-amino-acid chain; its full sequence is Putative iron-sulfur cluster insertion protein ErpA (121 aa).

Residues cysteine 49, cysteine 113, and cysteine 115 each contribute to the iron-sulfur cluster site.

Belongs to the HesB/IscA family. Homodimer. The cofactor is iron-sulfur cluster.

Functionally, required for insertion of 4Fe-4S clusters. This is Putative iron-sulfur cluster insertion protein ErpA from Nitrosomonas europaea (strain ATCC 19718 / CIP 103999 / KCTC 2705 / NBRC 14298).